Consider the following 186-residue polypeptide: Glutathione-independent glyoxalase DJR-1.2 (186 aa).

Residues Glu20, Cys105, and His124 contribute to the active site.

It belongs to the peptidase C56 family. DJ-1 subfamily. Expressed in various tissues, including pharyngeal muscles, pharynx-intestinal valve, ventral nerve cord, spermatheca, rectal gland, inner labial (IL) cells of head neurons, phasmid (PHA/PHB) neurons in tail and supporting sheath/socket cells, as well as in head mesodermal cells (HMC), excretory canals and coelomocytes.

It is found in the cytoplasm. It carries out the reaction methylglyoxal + H2O = (R)-lactate + H(+). Functionally, catalyzes the conversion of methylglyoxal (MG) or glyoxal (GO) to D-lactate or glycolic acid respectively in a single glutathione (GSH)-independent step. May play a role in detoxifying endogenously produced glyoxals. Involved in protection against glyoxal-induced cell death. Protects dopaminergic neurons from glyoxal-dependent neuronal degeneration. This chain is Glutathione-independent glyoxalase DJR-1.2, found in Caenorhabditis elegans.